Reading from the N-terminus, the 527-residue chain is Peptide chain release factor 3 (527 aa).

Residues 9–278 form the tr-type G domain; that stretch reads DIRRTFAIIS…GLTQWAPKPQ (270 aa). GTP contacts are provided by residues 18–25, 86–90, and 140–143; these read SHPDAGKT, DTPGH, and NKCD.

It belongs to the TRAFAC class translation factor GTPase superfamily. Classic translation factor GTPase family. PrfC subfamily.

The protein resides in the cytoplasm. Increases the formation of ribosomal termination complexes and stimulates activities of RF-1 and RF-2. It binds guanine nucleotides and has strong preference for UGA stop codons. It may interact directly with the ribosome. The stimulation of RF-1 and RF-2 is significantly reduced by GTP and GDP, but not by GMP. The chain is Peptide chain release factor 3 from Shewanella denitrificans (strain OS217 / ATCC BAA-1090 / DSM 15013).